The sequence spans 757 residues: UDP-N-acetylmuramoyl-L-alanyl-D-glutamate--2,6-diaminopimelate ligase MurE homolog, chloroplastic (757 aa).

Over residues 1 to 11 the composition is skewed to low complexity; it reads MATAPLAFHLP. A chloroplast-targeting transit peptide spans 1-53; it reads MATAPLAFHLPFPFPSASRPPPRLLPPSRRPPAARLAATRRFRPPTADDEPPE. Disordered stretches follow at residues 1–112, 126–152, and 172–195; these read MATA…DEFF, FTRR…ADEL, and VSLA…GDDG. A compositionally biased stretch (pro residues) spans 12 to 30; sequence FPFPSASRPPPRLLPPSRR. Composition is skewed to acidic residues over residues 47-56 and 142-152; these read ADDEPPEAAE and PEEEDGLADEL.

It belongs to the MurCDEF family. MurE subfamily. In terms of assembly, component of the plastid-encoded plastid RNA polymerase (PEP) complex.

It localises to the plastid. The protein resides in the chloroplast. Functionally, required for the activity of the plastid-encoded RNA polymerase (PEP) and full expression of genes transcribed by PEP. The polypeptide is UDP-N-acetylmuramoyl-L-alanyl-D-glutamate--2,6-diaminopimelate ligase MurE homolog, chloroplastic (Oryza sativa subsp. japonica (Rice)).